Reading from the N-terminus, the 60-residue chain is Large ribosomal subunit protein bL32 (60 aa).

Residues 1–23 (MAKHPVPKKKTSKSKRDMRRSHH) show a composition bias toward basic residues. A disordered region spans residues 1–26 (MAKHPVPKKKTSKSKRDMRRSHHALT).

This sequence belongs to the bacterial ribosomal protein bL32 family.

The sequence is that of Large ribosomal subunit protein bL32 from Deinococcus deserti (strain DSM 17065 / CIP 109153 / LMG 22923 / VCD115).